We begin with the raw amino-acid sequence, 319 residues long: GATA transcription factor 18 (319 aa).

Residues 1–15 are compositionally biased toward low complexity; the sequence is MPDAAAAAAAAQDAD. Positions 1–74 are disordered; it reads MPDAAAAAAA…AAPEPVSALL (74 aa). Acidic residues predominate over residues 32-60; the sequence is NNDDDGDDGTEEDEEEDDDEEGDEEELPP. One can recognise a Tify domain in the interval 74-109; sequence LPGSPNQLTLLFQGEVYVFESVTPEKVQAVLLLLGS. One can recognise a CCT domain in the interval 143–185; that stretch reads RVASLIRFREKRKERNFDKKIRYAVRKEVALRMQRRKGQFAGR. The GATA-type zinc-finger motif lies at 215–242; sequence CQNCGTSEKMTPAMRRGPAGPRTLCNAC. Residues 292–319 form a disordered region; that stretch reads ITASHGEVMGDSTPANEAEIGAPKAQSQ.

It belongs to the type IV zinc-finger family. Class C subfamily.

The protein localises to the nucleus. Functionally, transcriptional activator that specifically binds 5'-GATA-3' or 5'-GAT-3' motifs within gene promoters. This chain is GATA transcription factor 18, found in Oryza sativa subsp. indica (Rice).